The following is a 397-amino-acid chain: Tryptophan synthase beta chain (397 aa).

The residue at position 87 (lysine 87) is an N6-(pyridoxal phosphate)lysine.

It belongs to the TrpB family. As to quaternary structure, tetramer of two alpha and two beta chains. Pyridoxal 5'-phosphate serves as cofactor.

It carries out the reaction (1S,2R)-1-C-(indol-3-yl)glycerol 3-phosphate + L-serine = D-glyceraldehyde 3-phosphate + L-tryptophan + H2O. Its pathway is amino-acid biosynthesis; L-tryptophan biosynthesis; L-tryptophan from chorismate: step 5/5. The beta subunit is responsible for the synthesis of L-tryptophan from indole and L-serine. The sequence is that of Tryptophan synthase beta chain from Escherichia coli O17:K52:H18 (strain UMN026 / ExPEC).